The primary structure comprises 182 residues: Plasmolipin (182 aa).

Topologically, residues 1–35 (MAEFPSKVSTRTSSPAQGAEASVSALRPDLGFVRS) are cytoplasmic. Residue Ser-9 is modified to Phosphoserine. The MARVEL domain maps to 32–166 (FVRSRLGALM…SAFFSYQAWR (135 aa)). A helical transmembrane segment spans residues 36–56 (RLGALMLLQLVLGLLVWALIA). The Extracellular segment spans residues 57 to 68 (DTPYHLYPAYGW). Residues 69–89 (VMFVAVFLWLVTIVLFNLYLF) form a helical membrane-spanning segment. Residues 90–99 (QLHMKLYMVP) lie on the Cytoplasmic side of the membrane. Residues 100–120 (WPLVLMIFNISATVLYITAFI) traverse the membrane as a helical segment. Residues 121–141 (ACSAAVDLTSLRGTRPYNQRA) lie on the Extracellular side of the membrane. A helical membrane pass occupies residues 142 to 162 (AASFFACLVMIAYGVSAFFSY). At 163–182 (QAWRGVGSNAATSQMAGGYA) the chain is on the cytoplasmic side.

This sequence belongs to the MAL family. Forms oligomers. In terms of processing, phosphorylated.

The protein localises to the cell membrane. Its subcellular location is the myelin membrane. It is found in the apical cell membrane. The protein resides in the golgi apparatus. Its function is as follows. Main component of the myelin sheath that plays an important role in myelin membrane biogenesis and myelination. Plays an essential function in apical endocytosis. Regulates epithelial development through the regulation of apical endocytosis. Part of the intracellular machinery that mediates basolateral-to-apical transport of ICAM-1, an essential adhesion receptor in epithelial cells, from the subapical compartment in hepatic epithelial cells. The protein is Plasmolipin of Homo sapiens (Human).